Here is a 345-residue protein sequence, read N- to C-terminus: UbiA prenyltransferase domain-containing protein 1 (345 aa).

Helical transmembrane passes span 60–80, 90–110, 141–161, 169–189, 213–233, 251–273, 285–305, and 324–344; these read LALR…GTAI, LLLF…GNLV, VRFG…LYFI, LALI…GIGF, AVQV…LALS, QAGI…YNLL, ATRY…AFSL, and LNLL…AGSL.

Belongs to the UbiA prenyltransferase family.

Its subcellular location is the endoplasmic reticulum membrane. The protein resides in the golgi apparatus membrane. It is found in the mitochondrion membrane. The enzyme catalyses menadiol + (2E,6E,10E)-geranylgeranyl diphosphate = menaquinol-4 + diphosphate. It carries out the reaction all-trans-decaprenyl diphosphate + 4-hydroxybenzoate = 4-hydroxy-3-(all-trans-decaprenyl)benzoate + diphosphate. The protein operates within quinol/quinone metabolism; menaquinone biosynthesis. It participates in cofactor biosynthesis; ubiquinone biosynthesis. Its function is as follows. Prenyltransferase that mediates the formation of menaquinone-4 (MK-4) and coenzyme Q10. MK-4 is a vitamin K2 isoform required for endothelial cell development. Mediates the conversion of phylloquinone (PK) into MK-4, probably by cleaving the side chain of phylloquinone (PK) to release 2-methyl-1,4-naphthoquinone (menadione; K3) and then prenylating it with geranylgeranyl pyrophosphate (GGPP) to form MK-4. Also plays a role in cardiovascular development independently of MK-4 biosynthesis, by acting as a coenzyme Q10 biosynthetic enzyme: coenzyme Q10, also named ubiquinone, plays an important antioxidant role in the cardiovascular system. Mediates biosynthesis of coenzyme Q10 in the Golgi membrane, leading to protect cardiovascular tissues from NOS3/eNOS-dependent oxidative stress. This Xenopus tropicalis (Western clawed frog) protein is UbiA prenyltransferase domain-containing protein 1 (ubiad1).